A 206-amino-acid polypeptide reads, in one-letter code: Outer-membrane lipoprotein carrier protein (206 aa).

Residues 1–21 (MTRLLFVLVLSVCLLPVPVKA) form the signal peptide.

This sequence belongs to the LolA family. In terms of assembly, monomer.

It is found in the periplasm. Participates in the translocation of lipoproteins from the inner membrane to the outer membrane. Only forms a complex with a lipoprotein if the residue after the N-terminal Cys is not an aspartate (The Asp acts as a targeting signal to indicate that the lipoprotein should stay in the inner membrane). The chain is Outer-membrane lipoprotein carrier protein from Nitrosomonas europaea (strain ATCC 19718 / CIP 103999 / KCTC 2705 / NBRC 14298).